The primary structure comprises 375 residues: Glutamate 5-kinase (375 aa).

Residue Lys-17 coordinates ATP. Substrate contacts are provided by Ser-58, Asp-145, and Asn-157. ATP contacts are provided by residues 177-178 (SD) and 219-225 (TGGMVTK). Residues 281–359 (QGALTLDDGA…RELARELGPA (79 aa)) form the PUA domain.

This sequence belongs to the glutamate 5-kinase family.

The protein localises to the cytoplasm. It catalyses the reaction L-glutamate + ATP = L-glutamyl 5-phosphate + ADP. It participates in amino-acid biosynthesis; L-proline biosynthesis; L-glutamate 5-semialdehyde from L-glutamate: step 1/2. Its function is as follows. Catalyzes the transfer of a phosphate group to glutamate to form L-glutamate 5-phosphate. The polypeptide is Glutamate 5-kinase (Streptomyces avermitilis (strain ATCC 31267 / DSM 46492 / JCM 5070 / NBRC 14893 / NCIMB 12804 / NRRL 8165 / MA-4680)).